Here is a 115-residue protein sequence, read N- to C-terminus: Toxin-like structure LSTX-R1 (115 aa).

A signal peptide spans 1–18 (MKLSLIIIATSLVIAVVA). A propeptide spanning residues 19-51 (FPSKDSAATDFDKTESLENVEERVETALDERPR) is cleaved from the precursor.

It belongs to the neurotoxin 25 family. F7 subfamily. Contains 4 disulfide bonds. In terms of tissue distribution, expressed by the venom gland.

It is found in the secreted. The polypeptide is Toxin-like structure LSTX-R1 (Lycosa singoriensis (Wolf spider)).